Consider the following 518-residue polypeptide: GMP synthase [glutamine-hydrolyzing] (518 aa).

The 195-residue stretch at 6-200 (RLLIIDFGSQ…FVRLAGFKGD (195 aa)) folds into the Glutamine amidotransferase type-1 domain. Residue cysteine 84 is the Nucleophile of the active site. Residues histidine 175 and glutamate 177 contribute to the active site. Residues 201-393 (WTMGAYREEA…LGLPESFIGR (193 aa)) enclose the GMPS ATP-PPase domain. An ATP-binding site is contributed by 228–234 (SGGVDSS).

As to quaternary structure, homodimer.

It catalyses the reaction XMP + L-glutamine + ATP + H2O = GMP + L-glutamate + AMP + diphosphate + 2 H(+). The protein operates within purine metabolism; GMP biosynthesis; GMP from XMP (L-Gln route): step 1/1. Functionally, catalyzes the synthesis of GMP from XMP. The protein is GMP synthase [glutamine-hydrolyzing] of Cereibacter sphaeroides (strain ATCC 17023 / DSM 158 / JCM 6121 / CCUG 31486 / LMG 2827 / NBRC 12203 / NCIMB 8253 / ATH 2.4.1.) (Rhodobacter sphaeroides).